The sequence spans 347 residues: Large ribosomal subunit protein uL3 (347 aa).

The protein belongs to the universal ribosomal protein uL3 family. Part of the 50S ribosomal subunit. Forms a cluster with proteins L14 and L24e.

Functionally, one of the primary rRNA binding proteins, it binds directly near the 3'-end of the 23S rRNA, where it nucleates assembly of the 50S subunit. This is Large ribosomal subunit protein uL3 from Caldivirga maquilingensis (strain ATCC 700844 / DSM 13496 / JCM 10307 / IC-167).